The chain runs to 576 residues: Lysine--tRNA ligase, mitochondrial (576 aa).

The N-terminal 30 residues, 1 to 30 (MNVLLKRRSLTFAPRWLWCKCRSSRSRPYS), are a transit peptide targeting the mitochondrion.

This sequence belongs to the class-II aminoacyl-tRNA synthetase family.

Its subcellular location is the mitochondrion matrix. The enzyme catalyses tRNA(Lys) + L-lysine + ATP = L-lysyl-tRNA(Lys) + AMP + diphosphate. Functionally, catalyzes the attachment of lysine to tRNA(Lys) in the mitochondrion. The polypeptide is Lysine--tRNA ligase, mitochondrial (MSK1) (Saccharomyces cerevisiae (strain ATCC 204508 / S288c) (Baker's yeast)).